Consider the following 456-residue polypeptide: Bifunctional protein GlmU (456 aa).

A pyrophosphorylase region spans residues Met1–Arg229. Residues Leu11–Gly14, Lys25, Gln76, Gly81–Thr82, Tyr103–Asp105, Gly140, Glu154, Asn169, and Asn227 contribute to the UDP-N-acetyl-alpha-D-glucosamine site. Asp105 serves as a coordination point for Mg(2+). Asn227 lines the Mg(2+) pocket. The linker stretch occupies residues Leu230–Ala250. The tract at residues Gly251–Lys456 is N-acetyltransferase. Residues Arg333 and Lys351 each contribute to the UDP-N-acetyl-alpha-D-glucosamine site. His363 serves as the catalytic Proton acceptor. Residues Tyr366 and Asn377 each coordinate UDP-N-acetyl-alpha-D-glucosamine. Residues Ala380, Asn386 to Tyr387, Ser405, Ala423, and Arg440 each bind acetyl-CoA.

It in the N-terminal section; belongs to the N-acetylglucosamine-1-phosphate uridyltransferase family. This sequence in the C-terminal section; belongs to the transferase hexapeptide repeat family. Homotrimer. It depends on Mg(2+) as a cofactor.

The protein resides in the cytoplasm. The enzyme catalyses alpha-D-glucosamine 1-phosphate + acetyl-CoA = N-acetyl-alpha-D-glucosamine 1-phosphate + CoA + H(+). The catalysed reaction is N-acetyl-alpha-D-glucosamine 1-phosphate + UTP + H(+) = UDP-N-acetyl-alpha-D-glucosamine + diphosphate. It functions in the pathway nucleotide-sugar biosynthesis; UDP-N-acetyl-alpha-D-glucosamine biosynthesis; N-acetyl-alpha-D-glucosamine 1-phosphate from alpha-D-glucosamine 6-phosphate (route II): step 2/2. It participates in nucleotide-sugar biosynthesis; UDP-N-acetyl-alpha-D-glucosamine biosynthesis; UDP-N-acetyl-alpha-D-glucosamine from N-acetyl-alpha-D-glucosamine 1-phosphate: step 1/1. Its pathway is bacterial outer membrane biogenesis; LPS lipid A biosynthesis. Functionally, catalyzes the last two sequential reactions in the de novo biosynthetic pathway for UDP-N-acetylglucosamine (UDP-GlcNAc). The C-terminal domain catalyzes the transfer of acetyl group from acetyl coenzyme A to glucosamine-1-phosphate (GlcN-1-P) to produce N-acetylglucosamine-1-phosphate (GlcNAc-1-P), which is converted into UDP-GlcNAc by the transfer of uridine 5-monophosphate (from uridine 5-triphosphate), a reaction catalyzed by the N-terminal domain. The protein is Bifunctional protein GlmU of Shigella flexneri serotype 5b (strain 8401).